A 215-amino-acid chain; its full sequence is NADH-quinone oxidoreductase subunit C (215 aa).

The protein belongs to the complex I 30 kDa subunit family. As to quaternary structure, NDH-1 is composed of 14 different subunits. Subunits NuoB, C, D, E, F, and G constitute the peripheral sector of the complex.

The protein localises to the cell inner membrane. The catalysed reaction is a quinone + NADH + 5 H(+)(in) = a quinol + NAD(+) + 4 H(+)(out). Its function is as follows. NDH-1 shuttles electrons from NADH, via FMN and iron-sulfur (Fe-S) centers, to quinones in the respiratory chain. The immediate electron acceptor for the enzyme in this species is believed to be ubiquinone. Couples the redox reaction to proton translocation (for every two electrons transferred, four hydrogen ions are translocated across the cytoplasmic membrane), and thus conserves the redox energy in a proton gradient. In Methylobacterium radiotolerans (strain ATCC 27329 / DSM 1819 / JCM 2831 / NBRC 15690 / NCIMB 10815 / 0-1), this protein is NADH-quinone oxidoreductase subunit C.